Reading from the N-terminus, the 221-residue chain is Putative hemin import ATP-binding protein HrtA (221 aa).

The ABC transporter domain occupies 3–221 (LVVKDIVKNF…IELEDGKITD (219 aa)). 39–46 (GASGSGKT) contacts ATP.

It belongs to the ABC transporter superfamily. HrtA family. In terms of assembly, the complex is composed of two ATP-binding proteins (HrtA), two transmembrane proteins (HrtB) and a solute-binding protein.

The protein resides in the cell membrane. Part of the ABC transporter complex hrt involved in hemin import. Responsible for energy coupling to the transport system. The sequence is that of Putative hemin import ATP-binding protein HrtA (hrtA) from Staphylococcus aureus (strain Mu50 / ATCC 700699).